We begin with the raw amino-acid sequence, 157 residues long: Protein Smg (157 aa).

It belongs to the Smg family.

The sequence is that of Protein Smg from Pectobacterium atrosepticum (strain SCRI 1043 / ATCC BAA-672) (Erwinia carotovora subsp. atroseptica).